Here is a 147-residue protein sequence, read N- to C-terminus: NAD(P)H-quinone oxidoreductase subunit N (147 aa).

Belongs to the complex I NdhN subunit family. In terms of assembly, NDH-1 can be composed of about 15 different subunits; different subcomplexes with different compositions have been identified which probably have different functions.

It is found in the cellular thylakoid membrane. It carries out the reaction a plastoquinone + NADH + (n+1) H(+)(in) = a plastoquinol + NAD(+) + n H(+)(out). The catalysed reaction is a plastoquinone + NADPH + (n+1) H(+)(in) = a plastoquinol + NADP(+) + n H(+)(out). Functionally, NDH-1 shuttles electrons from an unknown electron donor, via FMN and iron-sulfur (Fe-S) centers, to quinones in the respiratory and/or the photosynthetic chain. The immediate electron acceptor for the enzyme in this species is believed to be plastoquinone. Couples the redox reaction to proton translocation, and thus conserves the redox energy in a proton gradient. Cyanobacterial NDH-1 also plays a role in inorganic carbon-concentration. The polypeptide is NAD(P)H-quinone oxidoreductase subunit N (Synechococcus sp. (strain JA-3-3Ab) (Cyanobacteria bacterium Yellowstone A-Prime)).